The chain runs to 329 residues: Malate dehydrogenase (329 aa).

12–18 is a binding site for NAD(+); the sequence is GAAGQIG. Residues Arg95 and Arg101 each coordinate substrate. NAD(+) is bound by residues Asn108, Gln115, and 132-134; that span reads VGN. Substrate-binding residues include Asn134 and Arg165. Residue His190 is the Proton acceptor of the active site.

It belongs to the LDH/MDH superfamily. MDH type 2 family.

It carries out the reaction (S)-malate + NAD(+) = oxaloacetate + NADH + H(+). In terms of biological role, catalyzes the reversible oxidation of malate to oxaloacetate. The polypeptide is Malate dehydrogenase (Bordetella bronchiseptica (strain ATCC BAA-588 / NCTC 13252 / RB50) (Alcaligenes bronchisepticus)).